We begin with the raw amino-acid sequence, 89 residues long: Small ribosomal subunit protein uS15 (89 aa).

The protein belongs to the universal ribosomal protein uS15 family. As to quaternary structure, part of the 30S ribosomal subunit. Forms a bridge to the 50S subunit in the 70S ribosome, contacting the 23S rRNA.

Its function is as follows. One of the primary rRNA binding proteins, it binds directly to 16S rRNA where it helps nucleate assembly of the platform of the 30S subunit by binding and bridging several RNA helices of the 16S rRNA. Functionally, forms an intersubunit bridge (bridge B4) with the 23S rRNA of the 50S subunit in the ribosome. This Gloeothece citriformis (strain PCC 7424) (Cyanothece sp. (strain PCC 7424)) protein is Small ribosomal subunit protein uS15.